We begin with the raw amino-acid sequence, 537 residues long: Aminopeptidase Y (537 aa).

Residues 1–21 (MHFSLKQLAVAAFYATNLGSA) form the signal peptide. A propeptide spanning residues 22 to 56 (YVIPQFFQEAFQQEEPIENYLPQLNDDDSSAVAAN) is cleaved from the precursor. 5 N-linked (GlcNAc...) asparagine glycosylation sites follow: Asn-85, Asn-96, Asn-115, Asn-150, and Asn-162. Zn(2+) is bound by residues His-314 and Asp-326. The Proton acceptor role is filled by Glu-358. Glu-359 contributes to the Zn(2+) binding site. N-linked (GlcNAc...) asparagine glycosylation is present at Asn-371. Asp-387 is a Zn(2+) binding site. Asn-427 carries an N-linked (GlcNAc...) asparagine glycan. Zn(2+) is bound at residue His-472. Asn-480 carries N-linked (GlcNAc...) asparagine glycosylation.

The protein belongs to the peptidase M28 family. M28A subfamily. Monomer. Zn(2+) is required as a cofactor.

It localises to the vacuole. The enzyme catalyses Preferentially, release of N-terminal lysine.. This Saccharomyces cerevisiae (strain ATCC 204508 / S288c) (Baker's yeast) protein is Aminopeptidase Y (APE3).